The following is a 94-amino-acid chain: DNA-directed RNA polymerase subunit omega (94 aa).

It belongs to the RNA polymerase subunit omega family. In terms of assembly, the RNAP catalytic core consists of 2 alpha, 1 beta, 1 beta' and 1 omega subunit. When a sigma factor is associated with the core the holoenzyme is formed, which can initiate transcription.

It carries out the reaction RNA(n) + a ribonucleoside 5'-triphosphate = RNA(n+1) + diphosphate. Its function is as follows. Promotes RNA polymerase assembly. Latches the N- and C-terminal regions of the beta' subunit thereby facilitating its interaction with the beta and alpha subunits. In Tolumonas auensis (strain DSM 9187 / NBRC 110442 / TA 4), this protein is DNA-directed RNA polymerase subunit omega.